Consider the following 288-residue polypeptide: 30 kDa spicule matrix protein (288 aa).

The signal sequence occupies residues 1-20 (MRCFVYVLVCVVASVSYSRA). Positions 93–163 (ANMYCGQMHP…YTNWEGMVAP (71 aa)) constitute a C-type lectin domain. N-linked (GlcNAc...) asparagine glycosylation occurs at Asn-103.

In terms of tissue distribution, spines and tube feet.

Matrix protein of the sea urchin embryo spicule. The function of the matrix proteins is to direct crystal growth in certain orientations and inhibit growth in others. This is 30 kDa spicule matrix protein (SM30) from Hemicentrotus pulcherrimus (Sea urchin).